Here is a 298-residue protein sequence, read N- to C-terminus: S-adenosylmethionine-dependent nucleotide dehydratase (298 aa).

In terms of domain architecture, Radical SAM core spans Ala-8–Glu-235. [4Fe-4S] cluster contacts are provided by Cys-22, Cys-26, and Cys-29.

Belongs to the radical SAM superfamily. Viperin family. [4Fe-4S] cluster serves as cofactor.

The catalysed reaction is CTP + AH2 + S-adenosyl-L-methionine = 3'-deoxy-3',4'-didehydro-CTP + 5'-deoxyadenosine + L-methionine + A + H2O + H(+). It carries out the reaction UTP + AH2 + S-adenosyl-L-methionine = 3'-deoxy-3',4'-didehydro-UTP + 5'-deoxyadenosine + L-methionine + A + H2O + H(+). Functionally, expression of pVip8 in E.coli (strain MG1655) confers resistance to phages lambda, P1, SECphi8 and T7. Prevents culture collapse upon infection with T7. Catalyzes the conversion of cytidine triphosphate (CTP) to 3'-deoxy-3',4'-didehydro-CTP (ddhCTP) and uridine triphosphate (UTP) to 3'-deoxy-3',4'-didehydro-UTP (ddhUTP), probably via a SAM-dependent radical mechanism. The modified nucleotides repress transcription from T7 RNA polymerase-directed genes (possibly by acting as chain terminators), strongly suggesting these nucleotides block viral polymerase transcription. The polypeptide is S-adenosylmethionine-dependent nucleotide dehydratase (Psychrobacter lutiphocae (strain DSM 21542 / CCUG 56590 / IMMIB L-1110)).